Here is a 48-residue protein sequence, read N- to C-terminus: Palustrin-3b (48 aa).

An intrachain disulfide couples cysteine 43 to cysteine 48.

Expressed by the skin glands.

The protein localises to the secreted. In terms of biological role, antimicrobial activity against Gram-negative bacterium E.coli. This chain is Palustrin-3b, found in Lithobates palustris (Pickerel frog).